We begin with the raw amino-acid sequence, 484 residues long: MLVARTCQLYPNAIASTLVHKFFLVFSKWEWPNPVLLKQPEECNLNLPVWDPRVNPSDRYHLMPIITPAYPQQNSTYNVSVSTRAVMVEEFKQGLAITDEILLVKAEWSKLFDAPNFFQKYKHYILLLASAPTEKQRLEWVGLVESKIRILVGSLEKNEFITLAHVNPQSFPSPSENSEKEEFRTMWVIGLVFKKMENSENLSVDLTYDIQSFTDTVYRQAINSKMFETEIKIAAMHVKRKQLHQLLPSHVLPKKKKHSVEGVKLVSLNDSSIDLSVDSDNSMSVPSPTNATRTSPLNSTGLSQGNSPATPVSLSVTNTQATDVMVPQNNSTENSGGSLNESIPETATHPAFSSTPRPLVTRVVSSMPLVNQVQKPVTNTVTKMPSPVAGVKRTSSPTNEESPKKTKTEEDENDSSNSTEVDEQNKLEPEELKEVHSEEKSSSPVPGALPSSQRSSSTDLSDISVLPATPIPVIKNSIKLRLNR.

Positions 240 to 257 (RKQLHQLLPSHVLPKKKK) match the Nuclear localization signal 1 motif. 3 disordered regions span residues 276–314 (SVDS…PVSL), 326–356 (VPQN…SSTP), and 375–484 (KPVT…RLNR). Positions 392-407 (KRTSSPTNEESPKKTK) match the Nuclear localization signal 2 motif. Positions 423–441 (EQNKLEPEELKEVHSEEKS) are enriched in basic and acidic residues. Over residues 451–464 (SSQRSSSTDLSDIS) the composition is skewed to low complexity.

The protein belongs to the poly(A) polymerase family. In terms of assembly, monomer.

The protein localises to the nucleus. The enzyme catalyses RNA(n) + ATP = RNA(n)-3'-adenine ribonucleotide + diphosphate. Functionally, polymerase that creates the 3'-poly(A) tail of mRNA's. May acquire specificity through interaction with a cleavage and polyadenylation factor (CPSF). The sequence is that of Poly(A) polymerase alpha-B (papola-b) from Xenopus laevis (African clawed frog).